The primary structure comprises 42 residues: uncharacterized protein (42 aa).

Residues 10 to 30 (VANWVTVILMALAGYAVLALA) form a helical membrane-spanning segment.

It localises to the host membrane. This is an uncharacterized protein from Acinetobacter calcoaceticus (Arthrobacter siderocapsulatus).